The primary structure comprises 408 residues: PTI1-like tyrosine-protein kinase 3 (408 aa).

Positions 59-76 (SSENEHLRSPKHHNDFGH) are enriched in basic and acidic residues. The tract at residues 59–91 (SSENEHLRSPKHHNDFGHHTRKPQAAVKPDALK) is disordered. Residues 113–395 (FGSKSLIGEG…IVVKALQPLL (283 aa)) enclose the Protein kinase domain. Residues 119 to 127 (IGEGSYGRA) and Lys141 each bind ATP. Asp245 acts as the Proton acceptor in catalysis.

This sequence belongs to the protein kinase superfamily. Tyr protein kinase family. In terms of assembly, interacts with OXI1. Phosphorylated by OXI1.

It localises to the cell membrane. The catalysed reaction is L-tyrosyl-[protein] + ATP = O-phospho-L-tyrosyl-[protein] + ADP + H(+). The polypeptide is PTI1-like tyrosine-protein kinase 3 (PTI13) (Arabidopsis thaliana (Mouse-ear cress)).